The primary structure comprises 268 residues: MSSSSPILLMFIFSIWMLISYSESTDYLVGDSENSWKFPLPTRHALTRWASNYQFIVGDTITFQYNNKTESVHEVEEEDYDRCGIRGEHVDHYDGNTMVVLKKTGIHHFISGKKRHCRLGLKLAVVVMVAPVLSSPPPPPSPPTPRSSTPIPHPPRRSLPSPPSPSPSPSPSPSPSPSPRSTPIPHPRKRSPASPSPSPSLSKSPSPSESPSLAPSPSDSVASLAPSSSPSDESPSPAPSPSSSGSKGGGAGHGFLEVSIAMMMFLIF.

Positions 1 to 24 (MSSSSPILLMFIFSIWMLISYSES) are cleaved as a signal peptide. The region spanning 25-129 (TDYLVGDSEN…GLKLAVVVMV (105 aa)) is the Phytocyanin domain. An N-linked (GlcNAc...) asparagine glycan is attached at asparagine 67. A disulfide bridge connects residues cysteine 83 and cysteine 117. 2 stretches are compositionally biased toward pro residues: residues 134–145 (SSPPPPPSPPTP) and 160–185 (PSPP…TPIP). Residues 134-253 (SSPPPPPSPP…SGSKGGGAGH (120 aa)) form a disordered region. Over residues 199-235 (PSLSKSPSPSESPSLAPSPSDSVASLAPSSSPSDESP) the composition is skewed to low complexity. Residue serine 243 is the site of GPI-anchor amidated serine attachment. Positions 244 to 268 (SGSKGGGAGHGFLEVSIAMMMFLIF) are cleaved as a propeptide — removed in mature form.

It belongs to the early nodulin-like (ENODL) family.

The protein localises to the cell membrane. Functionally, may act as a carbohydrate transporter. The protein is Early nodulin-20 of Medicago truncatula (Barrel medic).